The chain runs to 110 residues: Protein YcgL (110 aa).

Residues 14-98 (MFCVIYRSSK…PPEDLLKQHL (85 aa)) enclose the YcgL domain. Positions 87-110 (PPPPEDLLKQHLSSVGQNTSSADR) are disordered. Over residues 97-110 (HLSSVGQNTSSADR) the composition is skewed to polar residues.

This Salmonella newport (strain SL254) protein is Protein YcgL.